Here is a 419-residue protein sequence, read N- to C-terminus: Creatine kinase S-type, mitochondrial (419 aa).

The transit peptide at 1–39 (MASIFSKLLTGRNASLLFATMGTSVLTTGYLLNRQKVCA) directs the protein to the mitochondrion. Residues 40–64 (EVREQPRLFPPSADYPDLRKHNNCM) form a cardiolipin-binding region. The region spanning 46-132 (RLFPPSADYP…FDPVIKLRHN (87 aa)) is the Phosphagen kinase N-terminal domain. One can recognise a Phosphagen kinase C-terminal domain in the interval 159–401 (YVLSSRVRTG…NYLVDCEKKL (243 aa)). Residues 162-166 (SSRVR) and histidine 225 contribute to the ATP site. Tyrosine 255 carries the phosphotyrosine modification. ATP contacts are provided by residues arginine 270, arginine 326, 354 to 359 (RGTGGV), and aspartate 369. Threonine 356 bears the Phosphothreonine mark.

This sequence belongs to the ATP:guanido phosphotransferase family. As to quaternary structure, exists as an octamer composed of four CKMT2 homodimers. In terms of tissue distribution, sarcomere-specific. Found only in heart and skeletal muscles.

The protein localises to the mitochondrion inner membrane. It catalyses the reaction creatine + ATP = N-phosphocreatine + ADP + H(+). Reversibly catalyzes the transfer of phosphate between ATP and various phosphogens (e.g. creatine phosphate). Creatine kinase isoenzymes play a central role in energy transduction in tissues with large, fluctuating energy demands, such as skeletal muscle, heart, brain and spermatozoa. The sequence is that of Creatine kinase S-type, mitochondrial (CKMT2) from Homo sapiens (Human).